A 265-amino-acid chain; its full sequence is Cyclin-B2-5 (265 aa).

Belongs to the cyclin family. Cyclin AB subfamily.

In Arabidopsis thaliana (Mouse-ear cress), this protein is Cyclin-B2-5 (CYCB2-5).